A 190-amino-acid chain; its full sequence is uncharacterized protein (190 aa).

The chain crosses the membrane as a helical span at residues 1-21; that stretch reads MLVMSITFSFVAVALLVYFYV. Positions 103–114 are enriched in basic and acidic residues; sequence REEVCARPEHRS. The segment at 103–130 is disordered; the sequence is REEVCARPEHRSAPSRAGSSAAKPTPTK.

This sequence to B.burgdorferi BB0265.

It localises to the membrane. This is an uncharacterized protein from Treponema pallidum (strain Nichols).